Consider the following 73-residue polypeptide: MYVCLCQGVTDNQIRDAIYEGCCSYREVREATGVGTQCGKCACLAKQVVRETLNDLQSAQPVPAFGTTAFVAA.

[2Fe-2S] cluster is bound by residues C4 and C6. The phosphate site is built by R26 and R29. [2Fe-2S] cluster contacts are provided by C38 and C41. Residue K46 participates in phosphate binding.

This sequence belongs to the Bfd family. As to quaternary structure, monomer. Interacts with BfrB; up to 12 Bfd proteins can bind to the BfrB bacterioferritin complex (BFR). One Bfd protein binds to a BfrB dimer in the BFR, with the [2Fe-2S] cluster positioned about 22 Angstroms above the heme of BfrB. Does not interact with FtnA. [2Fe-2S] cluster serves as cofactor. Requires phosphate as cofactor.

Required for mobilization of iron from the bacterioferritin (BFR) complex, composed of BfrB and FtnA in varying proportions; mobilization requires the [2Fe-2S] cluster of this protein. Reduction of the BfrB heme group occurs in the presence of Bfd, strongly suggesting that the BfrB-Bfd complex allows heme to mediate electron transfer from FPR to the Fe(3+) iron core in the BFR prior to its release as Fe(2+). The protein is Bacterioferritin-associated ferredoxin of Pseudomonas aeruginosa (strain ATCC 15692 / DSM 22644 / CIP 104116 / JCM 14847 / LMG 12228 / 1C / PRS 101 / PAO1).